The sequence spans 1812 residues: Sperm flagellar protein 2 (1812 aa).

Residues 1–105 (MSEILCHWLN…LLYQLYIALQ (105 aa)) form the Calponin-homology (CH) domain. Coiled-coil stretches lie at residues 178-260 (LENF…KDLQ) and 374-403 (EERR…EEQA). Basic and acidic residues predominate over residues 618–630 (EEKASPVRQESGD). The interval 618–658 (EEKASPVRQESGDRSQNLHNVLSAEGTPETEDETRLSTKKT) is disordered. Coiled-coil stretches lie at residues 724–750 (LNQA…KKSQ), 803–827 (ENIN…DQIQ), and 868–897 (KEMF…KEEF). Residues 879–897 (ENKAKKKSEEKEAEKKEEF) are compositionally biased toward basic and acidic residues. Disordered regions lie at residues 879–1002 (ENKA…KPGS), 1272–1322 (EEKE…APVI), and 1793–1812 (EHIQ…EEKK). Pro residues predominate over residues 902 to 913 (ATPPTPPAPPPS). Basic and acidic residues-rich tracts occupy residues 914–929 (EPEK…ERSK), 943–961 (HGNR…ETSP), and 1272–1285 (EEKE…KEKP). Basic residues predominate over residues 1292–1310 (KKVKKEPPKKKREDKKGKG). The tract at residues 1317–1669 (ESAPVITVEE…AEKTSSFIDM (353 aa)) is interaction with IFT20.

Interacts (via C-terminus) with IFT20. Interacts with DYNC1I2. As to expression, predominantly expressed in ciliated tissues. Mainly expressed in testis, followed by trachea. Also expressed at lower level in lung, kidney and liver.

The protein localises to the cell projection. It localises to the cilium. Its subcellular location is the flagellum. The protein resides in the cytoplasm. It is found in the golgi apparatus. In terms of biological role, required for correct axoneme development in spermatozoa. Important for normal development of the manchette and sperm head morphology. Essential for male fertility. Plays a role in localization of the intraflagellar transport protein IFT20 to the manchette, suggesting function as an adapter for dynein-mediated protein transport during spermatogenesis. Also plays a role in bone growth where it seems to be required for normal osteoblast differentiation. This is Sperm flagellar protein 2 (SPEF2) from Sus scrofa (Pig).